A 279-amino-acid polypeptide reads, in one-letter code: 4-hydroxy-3-methylbut-2-enyl diphosphate reductase (279 aa).

[4Fe-4S] cluster is bound at residue C12. Residues H42 and H74 each contribute to the (2E)-4-hydroxy-3-methylbut-2-enyl diphosphate site. Positions 42 and 74 each coordinate dimethylallyl diphosphate. Isopentenyl diphosphate is bound by residues H42 and H74. Position 96 (C96) interacts with [4Fe-4S] cluster. Residue H124 coordinates (2E)-4-hydroxy-3-methylbut-2-enyl diphosphate. H124 is a dimethylallyl diphosphate binding site. H124 provides a ligand contact to isopentenyl diphosphate. The active-site Proton donor is the E126. T162 contributes to the (2E)-4-hydroxy-3-methylbut-2-enyl diphosphate binding site. A [4Fe-4S] cluster-binding site is contributed by C190. (2E)-4-hydroxy-3-methylbut-2-enyl diphosphate contacts are provided by S218, S219, N220, and S263. Residues S218, S219, N220, and S263 each coordinate dimethylallyl diphosphate. Positions 218, 219, 220, and 263 each coordinate isopentenyl diphosphate.

The protein belongs to the IspH family. Requires [4Fe-4S] cluster as cofactor.

The catalysed reaction is isopentenyl diphosphate + 2 oxidized [2Fe-2S]-[ferredoxin] + H2O = (2E)-4-hydroxy-3-methylbut-2-enyl diphosphate + 2 reduced [2Fe-2S]-[ferredoxin] + 2 H(+). It catalyses the reaction dimethylallyl diphosphate + 2 oxidized [2Fe-2S]-[ferredoxin] + H2O = (2E)-4-hydroxy-3-methylbut-2-enyl diphosphate + 2 reduced [2Fe-2S]-[ferredoxin] + 2 H(+). Its pathway is isoprenoid biosynthesis; dimethylallyl diphosphate biosynthesis; dimethylallyl diphosphate from (2E)-4-hydroxy-3-methylbutenyl diphosphate: step 1/1. It functions in the pathway isoprenoid biosynthesis; isopentenyl diphosphate biosynthesis via DXP pathway; isopentenyl diphosphate from 1-deoxy-D-xylulose 5-phosphate: step 6/6. Its function is as follows. Catalyzes the conversion of 1-hydroxy-2-methyl-2-(E)-butenyl 4-diphosphate (HMBPP) into a mixture of isopentenyl diphosphate (IPP) and dimethylallyl diphosphate (DMAPP). Acts in the terminal step of the DOXP/MEP pathway for isoprenoid precursor biosynthesis. This Alkaliphilus oremlandii (strain OhILAs) (Clostridium oremlandii (strain OhILAs)) protein is 4-hydroxy-3-methylbut-2-enyl diphosphate reductase.